A 189-amino-acid chain; its full sequence is Phomopsin biosynthesis cluster protein D (189 aa).

The protein belongs to the oryJ family.

Its function is as follows. Part of the gene cluster that mediates the biosynthesis of the phomopsins, a group of hexapeptide mycotoxins which infects lupins and causes lupinosis disease in livestock. The role of phomC within the phomopsins biosynthesis pathway has still to be determined. The pathway starts with the processing of the precursor phomA by several endopeptidases including kexin proteases as well as the cluster-specific S41 family peptidase phomP1 and the oligopeptidase phomG to produce 10 identical copies of the hexapeptide Tyr-Val-Ile-Pro-Ile-Asp. After being excised from the precursor peptide, the core peptides are cyclized and modified post-translationally by enzymes encoded within the gene cluster. The timing and order of proteolysis of the phomA precursor and PTMs are still unknown. Two tyrosinase-like enzymes, phomQ1 and phomQ2, catalyze the chlorination and hydroxylation of Tyr, respectively. PhomYb, is proposed to be involved in the construction of the macrocyclic structure. The other 4 ustYa family proteins may be involved in PTMs that generate the unique structure of phomopsin A. PhomYa is required for the hydroxylation of C-beta of Tyr. PhomYc, phomYd, and phomYe are responsible for the biosynthesis of 2,3-dehydroisoleucine (dIle), 2,3-dehydroaspartic acid (dAsp), and 3,4-dehydroproline (dPro), respectively. While dIle formation by phomYc is indispensable for the installation of dAsp by phomYd, the order of the other PTMs have not been elucidated yet. Most of the biosynthetic enzymes likely have broad substrate specificity, and thus, there might be a metabolic grid from a precursor to phomopsin A. The enzyme(s) responsible for the biosynthesis of 3,4-dehydrovaline (dVal) have also not been identified yet. Finally, phomM acts as an S-adenosylmethionine-dependent alpha-N-methyltransferase that catalyzes two successive N-methylation reactions, converting N-desmethyl-phomopsin A to phomopsin A and phomopsin A further to an N,N-dimethylated congener called phomopsin E. The polypeptide is Phomopsin biosynthesis cluster protein D (Diaporthe leptostromiformis (Lupinosis disease fungus)).